The sequence spans 81 residues: Putative chemokine-related protein B42 (81 aa).

3 disulfides stabilise this stretch: Cys7/Cys73, Cys8/Cys29, and Cys11/Cys45.

Expressed in placenta, heart, lung, liver, pancreas, skeletal muscle and brain.

It is found in the cytoplasm. This is Putative chemokine-related protein B42 from Homo sapiens (Human).